The following is a 198-amino-acid chain: Vacuolar iron transporter homolog 4 (198 aa).

The Cytoplasmic portion of the chain corresponds to Met-1–Ala-32. The helical transmembrane segment at Val-33–Val-53 threads the bilayer. The Vacuolar segment spans residues Lys-54–Met-60. Residues Leu-61–Ile-81 traverse the membrane as a helical segment. Topologically, residues Ser-82–Ala-114 are cytoplasmic. A helical membrane pass occupies residues Ile-115–Val-135. Over Lys-136 to Arg-141 the chain is Vacuolar. The helical transmembrane segment at Ile-142 to Val-162 threads the bilayer. Over Leu-163 to Arg-174 the chain is Cytoplasmic. A helical membrane pass occupies residues Val-175 to Ser-195. The Vacuolar portion of the chain corresponds to His-196 to Leu-198.

This sequence belongs to the CCC1 family.

It is found in the vacuole membrane. The catalysed reaction is Fe(2+)(in) = Fe(2+)(out). In terms of biological role, probable vacuolar iron transporter that may be involved in the regulation of iron distribution throughout the plant. The chain is Vacuolar iron transporter homolog 4 from Arabidopsis thaliana (Mouse-ear cress).